A 582-amino-acid polypeptide reads, in one-letter code: Probable inorganic phosphate transporter 1-9 (582 aa).

Residues 1–23 are Cytoplasmic-facing; that stretch reads MAPRIRVLAALDQARTQYYHFKA. The chain crosses the membrane as a helical span at residues 24–44; the sequence is IVIAGMGLFTDSYDLFCISPV. At 45–75 the chain is on the extracellular side; that stretch reads MKIFGRVYYAPSGSVDGSGSGPGVTPPAVVS. The helical transmembrane segment at 76 to 96 threads the bilayer; that stretch reads ATVGVALLGAVAGNVVFGALG. Over 97–103 the chain is Cytoplasmic; that stretch reads DRVGRRR. A helical membrane pass occupies residues 104–124; that stretch reads VYGACLLLMVCSSVGSGLSVC. At 125 to 130 the chain is on the extracellular side; sequence RTRRCA. The helical transmembrane segment at 131–151 threads the bilayer; sequence LASLCFFRFLLGVGVGGDYPL. Over 152–165 the chain is Cytoplasmic; the sequence is SATIMSEFANRRTR. A helical transmembrane segment spans residues 166 to 186; the sequence is GAFIAAVFSMQGFGILVSSAV. The Extracellular segment spans residues 187 to 210; it reads TMAVAAAFDHYTGYPAPLDTPECA. Residues 211-231 traverse the membrane as a helical segment; sequence DLAWRIILMAGAVPAALTYYW. Topologically, residues 232 to 307 are cytoplasmic; it reads RMSMPETARY…RRFVRQHGRD (76 aa). A helical transmembrane segment spans residues 308–328; sequence LFACAAAWFLLDIPYYSSTLF. Over 329–354 the chain is Extracellular; the sequence is QSQIYRPWFPPAAKVNAFQEAFNVAK. The helical transmembrane segment at 355-375 threads the bilayer; that stretch reads FQAVIAVASTIPGYFAAMLLI. Topologically, residues 376–385 are cytoplasmic; it reads ERAGRRRLQM. The chain crosses the membrane as a helical span at residues 386–406; that stretch reads AGFLLMAVFLFALAGPYDGYW. Residues 407–415 are Extracellular-facing; it reads RDHAKTAGY. A helical transmembrane segment spans residues 416–436; that stretch reads IVLYSLTFFSANLGPNTTTFI. The Cytoplasmic segment spans residues 437-451; the sequence is LPAELFPARFRSTCH. The chain crosses the membrane as a helical span at residues 452 to 472; the sequence is GLSGAAGKLGALVGSIGFLWA. The Extracellular segment spans residues 473–485; the sequence is SQQKDGAAAGHLP. Residues 486–506 traverse the membrane as a helical segment; sequence GIGMMYALFVLGGICLLGLAL. Residues 507–582 lie on the Cytoplasmic side of the membrane; it reads TYAFTPETMT…SPILPHRMSL (76 aa). The interval 519 to 541 is disordered; that stretch reads LEENESSVQAQSQVGDGGSDAGN.

It belongs to the major facilitator superfamily. Phosphate:H(+) symporter (TC 2.A.1.9) family. Expressed at low levels in roots.

It localises to the membrane. Functionally, high-affinity transporter for external inorganic phosphate. The sequence is that of Probable inorganic phosphate transporter 1-9 (PHT1-9) from Oryza sativa subsp. japonica (Rice).